Consider the following 613-residue polypeptide: MPKYRSATTTHGRNMAGARALWRATGVKDEDFGKPIIAVVNSFTQFVPGHVHLKDLGQLVAREIEAAGGIAKEFNTIAVDDGIAMGHGGMLYSLPSRELIADSVEYMVNAHCADAMVCISNCDKITPGMLMASMRLNIPVIFVSGGPMEAGKTKLSDQIIKLDLVDAMIQGADPKVSDEQSEQIERSACPTCGSCSGMFTANSMNCLTEALGLSQPGNGSLLATHADRKQLFISAGQRIVELTKRYYEQDDESALPRNIATKAAFENAMALDIAMGGSTNTVLHLLAAAQEGEVDFDMTDIDRMSRMVPHLCKVAPSTQKYHMEDVHRAGGVVGILGELNRAGLLHNQSKTVLGLTWEEQLAQYDIMLTDSEEVKRFYRAGPAGIRTTQAFSQDCRWDTLDDDRAQGCIRTKENAFSQDGGLAVLKGNIALDGCIVKTAGVDESILKFTGPAVVFESQEDAVEGILGGKVKAGDVVVIRYEGPKGGPGMQEMLYPTTYLKSMGLGKACALLTDGRFSGGTSGLSIGHASPEAANGGAIGLVKQGDLIAIDIPNRTISLQVSEQEMAERRAEQDALGWKPVSRQREVSFALKAYASMATSADKGAVRDKSKLEG.

D81 contacts Mg(2+). C122 provides a ligand contact to [2Fe-2S] cluster. Mg(2+)-binding residues include D123 and K124. K124 is modified (N6-carboxylysine). C195 is a [2Fe-2S] cluster binding site. E491 lines the Mg(2+) pocket. The Proton acceptor role is filled by S517.

Belongs to the IlvD/Edd family. In terms of assembly, homodimer. The cofactor is [2Fe-2S] cluster. Mg(2+) serves as cofactor.

The enzyme catalyses (2R)-2,3-dihydroxy-3-methylbutanoate = 3-methyl-2-oxobutanoate + H2O. It carries out the reaction (2R,3R)-2,3-dihydroxy-3-methylpentanoate = (S)-3-methyl-2-oxopentanoate + H2O. Its pathway is amino-acid biosynthesis; L-isoleucine biosynthesis; L-isoleucine from 2-oxobutanoate: step 3/4. It functions in the pathway amino-acid biosynthesis; L-valine biosynthesis; L-valine from pyruvate: step 3/4. Its function is as follows. Functions in the biosynthesis of branched-chain amino acids. Catalyzes the dehydration of (2R,3R)-2,3-dihydroxy-3-methylpentanoate (2,3-dihydroxy-3-methylvalerate) into 2-oxo-3-methylpentanoate (2-oxo-3-methylvalerate) and of (2R)-2,3-dihydroxy-3-methylbutanoate (2,3-dihydroxyisovalerate) into 2-oxo-3-methylbutanoate (2-oxoisovalerate), the penultimate precursor to L-isoleucine and L-valine, respectively. This is Dihydroxy-acid dehydratase from Vibrio vulnificus (strain YJ016).